Reading from the N-terminus, the 337-residue chain is Glyceraldehyde-3-phosphate dehydrogenase (337 aa).

Residues 13-14 (RI), aspartate 35, and arginine 80 contribute to the NAD(+) site. Residues 151–153 (SCT), threonine 182, 211–212 (TG), and arginine 234 each bind D-glyceraldehyde 3-phosphate. Residue cysteine 152 is the Nucleophile of the active site. Residue asparagine 316 participates in NAD(+) binding.

Belongs to the glyceraldehyde-3-phosphate dehydrogenase family. Homotetramer.

The protein localises to the cytoplasm. It carries out the reaction D-glyceraldehyde 3-phosphate + phosphate + NAD(+) = (2R)-3-phospho-glyceroyl phosphate + NADH + H(+). It functions in the pathway carbohydrate degradation; glycolysis; pyruvate from D-glyceraldehyde 3-phosphate: step 1/5. In Monascus purpureus (Red mold), this protein is Glyceraldehyde-3-phosphate dehydrogenase (GPD1).